Here is a 268-residue protein sequence, read N- to C-terminus: tRNA pseudouridine synthase A (268 aa).

Asp52 acts as the Nucleophile in catalysis. Tyr110 contributes to the substrate binding site.

It belongs to the tRNA pseudouridine synthase TruA family. In terms of assembly, homodimer.

It carries out the reaction uridine(38/39/40) in tRNA = pseudouridine(38/39/40) in tRNA. Formation of pseudouridine at positions 38, 39 and 40 in the anticodon stem and loop of transfer RNAs. The chain is tRNA pseudouridine synthase A from Prochlorococcus marinus (strain MIT 9312).